A 301-amino-acid chain; its full sequence is MSEPVAPDGAQPAPAGATPQPLQPIAGDRPATRTVFIVSDGTGITAETFSHSILAQFEMRFRKVRMPFVDTPEKAHIAVGKINEAFHTEGVPPIVFTTLVNQEANKALRRAKAMILDMFQTFIEPLEKELGLKSTHAIGRFHQNADTEAYKNRIEAINFSLAHDDGQSHKNLQEADVILVGVSRSGKTPTSLYLAMQYGLKAANYPLIPDDFERGKLPKALYDYKPKIFGLSIDPQRLTEIRNERRPGSKYAAIENCRYEVNEAEAMMRREGIKWLSSTHKSIEEIATTILQEIKVDRDNY.

Residues 1-24 (MSEPVAPDGAQPAPAGATPQPLQP) show a composition bias toward low complexity. The disordered stretch occupies residues 1–27 (MSEPVAPDGAQPAPAGATPQPLQPIAG). 181–188 (GVSRSGKT) provides a ligand contact to ADP.

It belongs to the pyruvate, phosphate/water dikinase regulatory protein family. PSRP subfamily.

The catalysed reaction is [pyruvate, water dikinase] + ADP = [pyruvate, water dikinase]-phosphate + AMP + H(+). The enzyme catalyses [pyruvate, water dikinase]-phosphate + phosphate + H(+) = [pyruvate, water dikinase] + diphosphate. Its function is as follows. Bifunctional serine/threonine kinase and phosphorylase involved in the regulation of the phosphoenolpyruvate synthase (PEPS) by catalyzing its phosphorylation/dephosphorylation. In Cupriavidus pinatubonensis (strain JMP 134 / LMG 1197) (Cupriavidus necator (strain JMP 134)), this protein is Putative phosphoenolpyruvate synthase regulatory protein.